A 483-amino-acid polypeptide reads, in one-letter code: AP-3 complex subunit mu (483 aa).

The region spanning 211–482 (NNELYVDLLE…KTQTGNFQVR (272 aa)) is the MHD domain.

The protein belongs to the adaptor complexes medium subunit family. Adaptor protein complex 3 (AP-3) is a heterotetramer composed of 2 large adaptins (APL5 and APL6), a medium adaptin (APM3) and a small adaptin (APS3).

The protein resides in the golgi apparatus. Its subcellular location is the cytoplasmic vesicle membrane. Part of the AP-3 complex, an adaptor-related complex which is not clathrin-associated. The complex is associated with the Golgi region as well as more peripheral structures. It facilitates the budding of vesicles from the Golgi membrane and may be directly involved in trafficking to the vacuole. Required for the transport via the ALP pathway, which directs the transport of the cargo proteins PHO8 and VAM3 to the vacuole. This Saccharomyces cerevisiae (strain ATCC 204508 / S288c) (Baker's yeast) protein is AP-3 complex subunit mu (APM3).